Here is a 227-residue protein sequence, read N- to C-terminus: Cytochrome c oxidase subunit 2 (227 aa).

Residues 1–26 (MATWSNLNLQNSSSPLMEQLIFFHDH) lie on the Mitochondrial intermembrane side of the membrane. A helical transmembrane segment spans residues 27–48 (TLMILLMITVLVAYIMSMLFFN). Topologically, residues 49–62 (LYTNRFLLEGQTIE) are mitochondrial matrix. A helical membrane pass occupies residues 63 to 82 (IIWTILPAITLIFIALPSLR). At 83-227 (LLYLLDESMD…FINWIKNYSS (145 aa)) the chain is on the mitochondrial intermembrane side. Residues histidine 160, cysteine 195, glutamate 197, cysteine 199, histidine 203, and methionine 206 each contribute to the Cu cation site. Mg(2+) is bound at residue glutamate 197.

The protein belongs to the cytochrome c oxidase subunit 2 family. As to quaternary structure, component of the cytochrome c oxidase (complex IV, CIV), a multisubunit enzyme composed of a catalytic core of 3 subunits and several supernumerary subunits. The complex exists as a monomer or a dimer and forms supercomplexes (SCs) in the inner mitochondrial membrane with ubiquinol-cytochrome c oxidoreductase (cytochrome b-c1 complex, complex III, CIII). The cofactor is Cu cation.

It is found in the mitochondrion inner membrane. It carries out the reaction 4 Fe(II)-[cytochrome c] + O2 + 8 H(+)(in) = 4 Fe(III)-[cytochrome c] + 2 H2O + 4 H(+)(out). Component of the cytochrome c oxidase, the last enzyme in the mitochondrial electron transport chain which drives oxidative phosphorylation. The respiratory chain contains 3 multisubunit complexes succinate dehydrogenase (complex II, CII), ubiquinol-cytochrome c oxidoreductase (cytochrome b-c1 complex, complex III, CIII) and cytochrome c oxidase (complex IV, CIV), that cooperate to transfer electrons derived from NADH and succinate to molecular oxygen, creating an electrochemical gradient over the inner membrane that drives transmembrane transport and the ATP synthase. Cytochrome c oxidase is the component of the respiratory chain that catalyzes the reduction of oxygen to water. Electrons originating from reduced cytochrome c in the intermembrane space (IMS) are transferred via the dinuclear copper A center (CU(A)) of subunit 2 and heme A of subunit 1 to the active site in subunit 1, a binuclear center (BNC) formed by heme A3 and copper B (CU(B)). The BNC reduces molecular oxygen to 2 water molecules using 4 electrons from cytochrome c in the IMS and 4 protons from the mitochondrial matrix. In Acheta domesticus (House cricket), this protein is Cytochrome c oxidase subunit 2 (COII).